We begin with the raw amino-acid sequence, 93 residues long: C-C motif chemokine 3 (93 aa).

The first 24 residues, 1–24, serve as a signal peptide directing secretion; sequence MKVAVAALAVLLCAMALCSQVFSA. 2 disulfides stabilise this stretch: Cys34–Cys58 and Cys35–Cys74.

It belongs to the intercrine beta (chemokine CC) family. As to quaternary structure, self-associates. Also heterodimer of MIP-1-alpha(4-69) and MIP-1-beta(3-69). Interacts with CCR1.

Its subcellular location is the secreted. Its function is as follows. Monokine with inflammatory and chemokinetic properties. Binds to CCR1, CCR4 and CCR5. One of the major HIV-suppressive factors produced by CD8+ T-cells. Recombinant MIP-1-alpha induces a dose-dependent inhibition of different strains of HIV-1, HIV-2, and simian immunodeficiency virus (SIV). The polypeptide is C-C motif chemokine 3 (CCL3) (Bos taurus (Bovine)).